Here is a 578-residue protein sequence, read N- to C-terminus: Glycosyltransferase family 92 protein RCOM_0530710 (578 aa).

The chain crosses the membrane as a helical span at residues 21–43 (SFFSVRSLTACLSFFVFLLFISS). In terms of domain architecture, GT92 spans 295–531 (YELCACTMLW…QNQGSKDRAP (237 aa)).

The protein belongs to the glycosyltransferase 92 family.

The protein localises to the membrane. The protein is Glycosyltransferase family 92 protein RCOM_0530710 of Ricinus communis (Castor bean).